A 79-amino-acid chain; its full sequence is Calcium/calmodulin-dependent protein kinase II inhibitor 2 (79 aa).

The disordered stretch occupies residues 1–21 (MSEILPYSEDKMGRFGADPEG). Positions 43-69 (KRPPKLGQIGRAKRVVIEDDRIDDVLK) are inhibitory domain.

It belongs to the CAMK2N family. In terms of assembly, interacts with CAMK2A and CAMK2B in the presence of Ca(2+)/calmodulin or after autophosphorylation.

It localises to the nucleus. The protein localises to the cytoplasm. Its subcellular location is the cytosol. The protein resides in the synapse. Its function is as follows. Potent and specific cellular inhibitor of CaM-kinase II (CAMK2). Traps Ca(2+)/calmodulin on CAMK2. The protein is Calcium/calmodulin-dependent protein kinase II inhibitor 2 (CAMK2N2) of Bos taurus (Bovine).